The sequence spans 130 residues: Small ribosomal subunit protein uS9 (130 aa).

The protein belongs to the universal ribosomal protein uS9 family.

The sequence is that of Small ribosomal subunit protein uS9 from Burkholderia cenocepacia (strain HI2424).